The sequence spans 251 residues: DNA repair protein RecO (251 aa).

This sequence belongs to the RecO family.

Functionally, involved in DNA repair and RecF pathway recombination. This is DNA repair protein RecO from Albidiferax ferrireducens (strain ATCC BAA-621 / DSM 15236 / T118) (Rhodoferax ferrireducens).